The following is a 52-amino-acid chain: Ornatin-C (52 aa).

The short motif at 42 to 44 (RGD) is the Cell attachment site element.

This sequence belongs to the ornatin family.

Its subcellular location is the secreted. Potent inhibitor of fibrinogen interaction with platelet receptors expressed on glycoprotein IIb-IIIa complex. May prevent blood from clotting during either feeding and/or storage of ingested blood. This chain is Ornatin-C, found in Placobdella ornata (Turtle leech).